The sequence spans 117 residues: Non-specific lipid-transfer protein (117 aa).

The N-terminal stretch at 1-26 (MASSAFVKFTCALVMCMMVAAPLAEA) is a signal peptide. Intrachain disulfides connect C29–C76, C39–C53, C54–C99, and C74–C113.

The protein belongs to the plant LTP family.

In terms of biological role, plant non-specific lipid-transfer proteins transfer phospholipids as well as galactolipids across membranes. May play a role in wax or cutin deposition in the cell walls of expanding epidermal cells and certain secretory tissues. Also has fungicide activity. This Beta vulgaris (Sugar beet) protein is Non-specific lipid-transfer protein (IWF1').